The primary structure comprises 321 residues: Methionyl-tRNA formyltransferase (321 aa).

111–114 is a (6S)-5,6,7,8-tetrahydrofolate binding site; sequence GLLP.

The protein belongs to the Fmt family.

It catalyses the reaction L-methionyl-tRNA(fMet) + (6R)-10-formyltetrahydrofolate = N-formyl-L-methionyl-tRNA(fMet) + (6S)-5,6,7,8-tetrahydrofolate + H(+). Functionally, attaches a formyl group to the free amino group of methionyl-tRNA(fMet). The formyl group appears to play a dual role in the initiator identity of N-formylmethionyl-tRNA by promoting its recognition by IF2 and preventing the misappropriation of this tRNA by the elongation apparatus. The protein is Methionyl-tRNA formyltransferase of Chlamydia pneumoniae (Chlamydophila pneumoniae).